The following is a 521-amino-acid chain: Probable methylmalonate-semialdehyde/malonate-semialdehyde dehydrogenase [acylating], mitochondrial (521 aa).

NAD(+)-binding residues include F172, K196, E199, R200, and S249. The Nucleophile role is filled by C304. Residue E404 participates in NAD(+) binding.

This sequence belongs to the aldehyde dehydrogenase family. In terms of assembly, homotetramer.

It localises to the mitochondrion. The enzyme catalyses 2-methyl-3-oxopropanoate + NAD(+) + CoA + H2O = propanoyl-CoA + hydrogencarbonate + NADH + H(+). It catalyses the reaction 3-oxopropanoate + NAD(+) + CoA + H2O = hydrogencarbonate + acetyl-CoA + NADH + H(+). Functionally, probable malonate and methylmalonate semialdehyde dehydrogenase involved in the catabolism of valine, thymine, and compounds catabolized by way of beta-alanine, including uracil and cytidine. The sequence is that of Probable methylmalonate-semialdehyde/malonate-semialdehyde dehydrogenase [acylating], mitochondrial from Aedes aegypti (Yellowfever mosquito).